The following is a 137-amino-acid chain: Large ribosomal subunit protein uL16c (137 aa).

The disordered stretch occupies residues 1–21 (MLSPKKTKYRKQHRGRMKGKA).

Belongs to the universal ribosomal protein uL16 family. In terms of assembly, part of the 50S ribosomal subunit.

It is found in the plastid. The protein resides in the chloroplast. The protein is Large ribosomal subunit protein uL16c of Oedogonium cardiacum (Filamentous green alga).